Here is a 97-residue protein sequence, read N- to C-terminus: Integration host factor subunit alpha (97 aa).

The protein belongs to the bacterial histone-like protein family. As to quaternary structure, heterodimer of an alpha and a beta chain.

Its function is as follows. This protein is one of the two subunits of integration host factor, a specific DNA-binding protein that functions in genetic recombination as well as in transcriptional and translational control. The protein is Integration host factor subunit alpha of Colwellia psychrerythraea (strain 34H / ATCC BAA-681) (Vibrio psychroerythus).